Here is a 252-residue protein sequence, read N- to C-terminus: Neurotrophic factor BDNF precursor form (252 aa).

Residues Met-1–Ala-18 form the signal peptide. Residues Ala-19–Arg-133 constitute a propeptide that is removed on maturation. Residues Leu-43–Ser-62 form a disordered region. N-linked (GlcNAc...) asparagine glycosylation is present at Asn-126. Cystine bridges form between Cys-146-Cys-213, Cys-191-Cys-242, and Cys-201-Cys-244.

Belongs to the NGF-beta family. As to quaternary structure, monomers and homodimers. Binds to NTRK2/TRKB. Can form heterodimers with other neurotrophin family members, such as NTF3 and NTF4 (in vitro), but the physiological relevance of this is not clear. BDNF precursor form: interacts with the heterodimer formed by NGFR and SORCS2. Mature BDNF has much lower affinity for the heterodimer formed by NGFR and SORCS2. In terms of processing, N-glycosylated and glycosulfated, contrary to mature BDNF. Post-translationally, mature BDNF is produced by proteolytic removal of the propeptide, catalyzed by a FURIN family member. In addition, the precursor form is proteolytically cleaved within the propeptide, but this is not an obligatory intermediate for the production of mature BDNF. Can be converted into mature BDNF by plasmin (PLG). As to expression, brain and central nervous system.

It localises to the secreted. Its function is as follows. Important signaling molecule that activates signaling cascades downstream of NTRK2. During development, promotes the survival and differentiation of selected neuronal populations of the peripheral and central nervous systems. Participates in axonal growth, pathfinding and in the modulation of dendritic growth and morphology. Major regulator of synaptic transmission and plasticity at adult synapses in many regions of the CNS. The versatility of BDNF is emphasized by its contribution to a range of adaptive neuronal responses including long-term potentiation (LTP), long-term depression (LTD), certain forms of short-term synaptic plasticity, as well as homeostatic regulation of intrinsic neuronal excitability. Functionally, important signaling molecule that activates signaling cascades downstream of NTRK2. Activates signaling cascades via the heterodimeric receptor formed by NGFR and SORCS2. Signaling via NGFR and SORCS2 plays a role in synaptic plasticity and long-term depression (LTD). Binding to NGFR and SORCS2 promotes neuronal apoptosis. Promotes neuronal growth cone collapse. The protein is Neurotrophic factor BDNF precursor form (BDNF) of Sus scrofa (Pig).